The primary structure comprises 205 residues: uncharacterized protein (205 aa).

A signal peptide spans 1–40 (MSAGKSYRKKMKQRRMNMKISKYALGILMLSLVFVLSACG). A disordered region spans residues 44–82 (STKESTHDNHSDSSTHEEMDHSGSADVPEGLQESKNPKY). Positions 47–66 (ESTHDNHSDSSTHEEMDHSG) are enriched in basic and acidic residues.

This is an uncharacterized protein from Bacillus subtilis (strain 168).